The sequence spans 185 residues: Ribosome-recycling factor (185 aa).

This sequence belongs to the RRF family.

The protein resides in the cytoplasm. In terms of biological role, responsible for the release of ribosomes from messenger RNA at the termination of protein biosynthesis. May increase the efficiency of translation by recycling ribosomes from one round of translation to another. The chain is Ribosome-recycling factor from Clostridium perfringens (strain ATCC 13124 / DSM 756 / JCM 1290 / NCIMB 6125 / NCTC 8237 / Type A).